The chain runs to 1664 residues: Cortactin-binding protein 2 (1664 aa).

Disordered stretches follow at residues 1-23, 268-440, 455-479, and 495-618; these read MATDGASCEPDLSRAPEDAAGAA, QLKR…ALHP, GNANDPDQNGNTTQSPPSRDVSPTS, and QALS…KPSI. A coiled-coil region spans residues 119–276; it reads RKMQERMSTQ…EQLKRGSDSK (158 aa). Low complexity-rich tracts occupy residues 368–379 and 395–407; these read SSAPTIPAASAS and TSSTPPIPSGTTP. R499 is subject to Asymmetric dimethylarginine. ANK repeat units lie at residues 710–740, 744–773, 777–806, 810–839, 843–872, and 913–943; these read GRPTLLQQAAAQGNVTLLSMLLNEEGLDTNY, DGHSALYSAATNGHADCVRLLLNAEAQVNA, NGFTPLCAAAAQGHFECLELLLASDADVNH, GGQTPLYLACKNGNTDCIKLLLEAGTDRSI, DGWTPVHAAVDTGNVDSLKLLMYYQAPARG, and EGWTAAHIAASKGFKNCLEILCRHGGLEPEK. The disordered stretch occupies residues 871-900; it reads RGNSSNEEEPESGAFARDGGEESSEGTSEP. Residues 1447–1483 are disordered; that stretch reads SKKKGESGAWRKVSTSPRKKSGRFSSPIWNEPDLSPG. S1525 is subject to Phosphoserine. The interval 1558–1664 is disordered; sequence RTFHSSGSNP…KHEQVEKPNT (107 aa). Residues 1587–1600 are compositionally biased toward polar residues; it reads PLSSHQATECSTSK. Positions 1625-1639 are enriched in low complexity; sequence SQNTKRSSSSSNTRQ. Basic and acidic residues predominate over residues 1646-1664; the sequence is SKEENWNLHKHEQVEKPNT.

Interacts with CTTN/cortactin SH3 domain. Interacts with STRN, STRN4/zinedin and MOB4/phocein; this interactions mediate the association with the STRIPAK core complex and may regulate dendritic spine distribution of the STRIPAK complex in hippocampal neurons. Activation of glutamate receptors weakens the interaction with STRN and STRN4.

The protein resides in the cytoplasm. The protein localises to the cell cortex. It is found in the cell projection. It localises to the dendritic spine. Regulates the dendritic spine distribution of CTTN/cortactin in hippocampal neurons, and thus controls dendritic spinogenesis and dendritic spine maintenance. Associates with the striatin-interacting phosphatase and kinase (STRIPAK) core complex to regulate dendritic spine distribution of the STRIPAK complex in hippocampal neurons. The chain is Cortactin-binding protein 2 (CTTNBP2) from Oryctolagus cuniculus (Rabbit).